The chain runs to 142 residues: LRPALQGVRASPCPKGWLDFRGNCYGYFRHELPWRKAQAWCRALRDGCHLASIHSAEEHRAIARFVSQCQRGEEEENVWIGLRQLVKLWAWSDGSKMRYSAWDDDEFTKGNYCAALEDSSGFLSWEDDSCGERNAFICKYAA.

Cystine bridges form between cysteine 13–cysteine 24, cysteine 41–cysteine 138, and cysteine 113–cysteine 130. Positions 20-139 (FRGNCYGYFR…CGERNAFICK (120 aa)) constitute a C-type lectin domain.

The protein localises to the secreted. Its subcellular location is the extracellular space. It localises to the extracellular matrix. The sequence is that of Dromaiocalcin-1 from Dromaius novaehollandiae (Emu).